A 161-amino-acid polypeptide reads, in one-letter code: Small ribosomal subunit protein uS19 (161 aa).

Over residues 1-19 (MARQKKYSGKGGARKKNKQ) the composition is skewed to basic residues. A disordered region spans residues 1 to 26 (MARQKKYSGKGGARKKNKQKQNVAPR).

It belongs to the universal ribosomal protein uS19 family.

Its function is as follows. Protein S19 forms a complex with S13 that binds strongly to the 16S ribosomal RNA. This chain is Small ribosomal subunit protein uS19, found in Methanococcus maripaludis (strain DSM 14266 / JCM 13030 / NBRC 101832 / S2 / LL).